Consider the following 229-residue polypeptide: Glycerol-3-phosphate acyltransferase (229 aa).

The next 6 helical transmembrane spans lie at 2-22 (WSLT…GALW), 56-76 (LATV…ASVI), 93-113 (FVVL…YPIF), 129-149 (LFAL…AVLL), 151-171 (SRYV…IVAL), and 178-198 (ADLD…IVVA).

It belongs to the PlsY family. Probably interacts with PlsX.

The protein resides in the cell inner membrane. It carries out the reaction an acyl phosphate + sn-glycerol 3-phosphate = a 1-acyl-sn-glycero-3-phosphate + phosphate. It participates in lipid metabolism; phospholipid metabolism. Its function is as follows. Catalyzes the transfer of an acyl group from acyl-phosphate (acyl-PO(4)) to glycerol-3-phosphate (G3P) to form lysophosphatidic acid (LPA). This enzyme utilizes acyl-phosphate as fatty acyl donor, but not acyl-CoA or acyl-ACP. The chain is Glycerol-3-phosphate acyltransferase from Salinibacter ruber (strain DSM 13855 / M31).